Here is a 448-residue protein sequence, read N- to C-terminus: MKVTDKKIEGCQASITVEMDPAEVEAGLSKTYRRLVKKVEIPGFRKGKTPRDVFEKYLGREKMLDEVVDDIVPEACQQAINDDEEIKPFAAPKIAMVTTEPFVFSARIPLPPVVELGDYKTIRAAKEKVEITEENIDTVIDQVLHQRATWEKAERPVKMGDMLLMKVESTLNGEPYLNREDMQYSVREEAIYPAPGFGEHLVDMVVGEPKEFSIVFPEDHARAELAGKTAAFKVTIQEIREEKLPELNDAFAHELNPEFNTLAELRQRIRENMQERQDDQAQAKFEDQIVEALIKMSKIDYPEVMVETELDQIIEQQLQRLQSTIKSPEEFRATLSQLSPADMQQRYRPLAEQRVASSLALGKLATTENLIPSDEEVDAEIERLTQDSGDKKEEEKAFYNKPDTRDRLIQLLTARKTMAFIDEIALQPALEAVEPKSDEGEKTEEADK.

In terms of domain architecture, PPIase FKBP-type spans 160–245 (GDMLLMKVES…IQEIREEKLP (86 aa)).

This sequence belongs to the FKBP-type PPIase family. Tig subfamily.

The protein localises to the cytoplasm. The catalysed reaction is [protein]-peptidylproline (omega=180) = [protein]-peptidylproline (omega=0). Involved in protein export. Acts as a chaperone by maintaining the newly synthesized protein in an open conformation. Functions as a peptidyl-prolyl cis-trans isomerase. The polypeptide is Trigger factor (Dehalococcoides mccartyi (strain ATCC BAA-2266 / KCTC 15142 / 195) (Dehalococcoides ethenogenes (strain 195))).